The following is a 486-amino-acid chain: E3 ubiquitin-protein ligase TRIM50 (486 aa).

Residues 16 to 57 (CPVCLEVFKEPLMLQCGHSYCKGCLLSLSRHLDSELRCPVCR) form an RING-type zinc finger. Residues 84–125 (PEPQVCTHHRNPLSLFCEKDQELICGLCGLLGSHQHHRVTPV) form a B box-type zinc finger. Residues cysteine 89, histidine 92, cysteine 111, and histidine 117 each contribute to the Zn(2+) site. Coiled-coil stretches lie at residues 125–170 (VSTV…ESDV) and 204–235 (LVAS…FGNE). Residues 275-474 (DIKLTVWKRL…LPMVLPLPSG (200 aa)) enclose the B30.2/SPRY domain. Lysine 372 carries the N6-acetyllysine modification.

Belongs to the TRIM/RBCC family. In terms of assembly, can form dimers and trimers. Interacts with several E2 ubiquitin-conjugating enzymes, including UBE2L6, UBE2E1, UBE2E3. No interaction with UBE2H. Interacts with BECN1. Interacts with SQSTM1. Interacts with NLRP3. Post-translationally, auto-ubiquitinated. In terms of processing, acetylated by EP300 and KAT2B. HDAC6 drives TRIM50 deacetylation. Acetylation antagonizes with TRIM50 ubiquitination.

Its subcellular location is the cytoplasm. The enzyme catalyses S-ubiquitinyl-[E2 ubiquitin-conjugating enzyme]-L-cysteine + [acceptor protein]-L-lysine = [E2 ubiquitin-conjugating enzyme]-L-cysteine + N(6)-ubiquitinyl-[acceptor protein]-L-lysine.. In terms of biological role, E3 ubiquitin-protein ligase that ubiquitinates Beclin-1/BECN1 in a 'Lys-63'-dependent manner enhancing its binding to ULK1. In turn, promotes starvation-induced autophagy activation. Also interacts with p62/SQSTM1 protein and thereby induces the formation and the autophagy clearance of aggresome-associated polyubiquitinated proteins through HDAC6 interaction. Also promotes NLRP3 inflammasome activation by directly inducing NLRP3 oligomerization independent of its E3 ligase function. This chain is E3 ubiquitin-protein ligase TRIM50 (TRIM50), found in Sus scrofa (Pig).